We begin with the raw amino-acid sequence, 453 residues long: Serine/threonine-protein phosphatase 2A 55 kDa regulatory subunit B delta isoform (453 aa).

4 WD repeats span residues 32–71, 97–138, 181–219, and 230–270; these read AEADIISTVEFNYSGDLLATGDKGGRVVIFQREQENKSRP, EIEE…KRAE, AHTYHINSISVNSDHETYLSADDLRINLWHLEITDRSFN, and ELTE…LCDR. A Phosphoserine modification is found at serine 285. 3 WD repeats span residues 289–327, 344–385, and 420–452; these read EIISSISDVKFSHSGRYMMTRDYLSVKVWDLNMESRPVE, ENDC…DVTL, and DFNKKILHTAWHPVDNVIAVAATNNLYIFQDKI. Tyrosine 305 carries the post-translational modification Phosphotyrosine. Phosphothreonine is present on threonine 308.

Belongs to the phosphatase 2A regulatory subunit B family. PP2A consists of a common heterodimeric core enzyme, composed of a 36 kDa catalytic subunit (subunit C) and a 65 kDa constant regulatory subunit (PR65 or subunit A), that associates with a variety of regulatory subunits. Proteins that associate with the core dimer include three families of regulatory subunits B (the R2/B/PR55/B55, R3/B''/PR72/PR130/PR59 and R5/B'/B56 families), the 48 kDa variable regulatory subunit, viral proteins, and cell signaling molecules. Interacts with ENSA (when phosphorylated at 'Ser-67') and ARPP19 (when phosphorylated at 'Ser-62'), leading to inhibit PP2A activity. Interacts with IER5.

The protein resides in the cytoplasm. Substrate-recognition subunit of protein phosphatase 2A (PP2A) that plays a key role in cell cycle by controlling mitosis entry and exit. Involved in chromosome clustering during late mitosis by mediating dephosphorylation of MKI67. The activity of PP2A complexes containing PPP2R2D (PR55-delta) fluctuate during the cell cycle: the activity is high in interphase and low in mitosis. This Homo sapiens (Human) protein is Serine/threonine-protein phosphatase 2A 55 kDa regulatory subunit B delta isoform (PPP2R2D).